The sequence spans 147 residues: Secreted RxLR effector protein BLN04 (147 aa).

A signal peptide spans 1 to 23; it reads MATMRRICFLFVFNLAVATSTQG. A dEER motif is present at residues 58–61; sequence SEER. A helical membrane pass occupies residues 117–137; that stretch reads VYIYTILFLSIPIILGVAMYI.

Belongs to the RxLR effector family. In terms of assembly, interacts with host transcription factor NAC069.

Its subcellular location is the secreted. The protein localises to the host membrane. Its function is as follows. Secreted effector that inhibits stress-induced relocalization of the transcription factor NAC069 to the nucleus, thus affecting its broad role in abiotic and biotic stress responses. This is Secreted RxLR effector protein BLN04 from Bremia lactucae (Lettuce downy mildew).